The primary structure comprises 434 residues: Trehalose-phosphatase (434 aa).

Mg(2+) is bound by residues aspartate 156 and aspartate 158. Aspartate 158 (proton donor/acceptor) is an active-site residue. Position 275–277 (275–277 (QKK)) interacts with substrate. Aspartate 366 is a binding site for Mg(2+).

This sequence belongs to the gob-1 trehalose phosphatase family. It depends on Mg(2+) as a cofactor.

The catalysed reaction is alpha,alpha-trehalose 6-phosphate + H2O = alpha,alpha-trehalose + phosphate. In terms of biological role, catalyzes the hydrolysis of trehalose 6-phosphate to trehalose and phosphate; prevents the accumulation of toxic levels of trehalose 6-phosphate. This chain is Trehalose-phosphatase (gob-1), found in Caenorhabditis briggsae.